The primary structure comprises 429 residues: Serine hydroxymethyltransferase (429 aa).

(6S)-5,6,7,8-tetrahydrofolate contacts are provided by residues Leu127 and 131 to 133 (GHL). The residue at position 236 (Lys236) is an N6-(pyridoxal phosphate)lysine. Glu252 provides a ligand contact to (6S)-5,6,7,8-tetrahydrofolate.

Belongs to the SHMT family. In terms of assembly, homodimer. The cofactor is pyridoxal 5'-phosphate.

It localises to the cytoplasm. The enzyme catalyses (6R)-5,10-methylene-5,6,7,8-tetrahydrofolate + glycine + H2O = (6S)-5,6,7,8-tetrahydrofolate + L-serine. It participates in one-carbon metabolism; tetrahydrofolate interconversion. The protein operates within amino-acid biosynthesis; glycine biosynthesis; glycine from L-serine: step 1/1. In terms of biological role, catalyzes the reversible interconversion of serine and glycine with tetrahydrofolate (THF) serving as the one-carbon carrier. This reaction serves as the major source of one-carbon groups required for the biosynthesis of purines, thymidylate, methionine, and other important biomolecules. Also exhibits THF-independent aldolase activity toward beta-hydroxyamino acids, producing glycine and aldehydes, via a retro-aldol mechanism. The protein is Serine hydroxymethyltransferase of Rhodospirillum centenum (strain ATCC 51521 / SW).